The sequence spans 71 residues: Guanine nucleotide-binding protein G(I)/G(S)/G(O) subunit gamma-2 (71 aa).

An N-acetylalanine modification is found at Ala-2. Residue Cys-68 is modified to Cysteine methyl ester. The S-geranylgeranyl cysteine moiety is linked to residue Cys-68. A propeptide spans 69–71 (removed in mature form); sequence AIL.

It belongs to the G protein gamma family. G proteins are composed of 3 units, alpha, beta and gamma. In this context, interacts with GNB2. The heterodimer formed by GNB1 and GNG2 interacts with ARHGEF5. The heterodimer formed by GNB1 and GNG2 interacts with GRK2. Component of the TAS2R14-GNAI1 complex, consisting of TAS2R14, GNAI1, GNB1 and GNG2. Forms complexes with TAS2R14 and G-proteins; these complexes play a role in the perception of bitterness. Component of the TAS2R14-GNAT3 complex, consisting of TAS2R14, GNAT3, GNB1 and GNG2. Component of the TAS2R14-GNAS2 complex, consisting of TAS2R14, GNAS2, GNB1 and GNG2. As to expression, adrenal gland and brain.

It is found in the cell membrane. In terms of biological role, guanine nucleotide-binding proteins (G proteins) are involved as a modulator or transducer in various transmembrane signaling systems. The beta and gamma chains are required for the GTPase activity, for replacement of GDP by GTP, and for G protein-effector interaction. This chain is Guanine nucleotide-binding protein G(I)/G(S)/G(O) subunit gamma-2 (GNG2), found in Bos taurus (Bovine).